A 377-amino-acid chain; its full sequence is Endoplasmic reticulum-Golgi intermediate compartment protein 2 (377 aa).

The Cytoplasmic segment spans residues 1–33 (MRRLNRKKTLSLVKELDAFPKVPESYVETSASG). Residues 34–54 (GTVSLIAFTTMALLTIMEFSV) form a helical membrane-spanning segment. Residues 55-319 (YQDTWMKYEY…PFWQFFVRLC (265 aa)) are Lumenal-facing. A helical membrane pass occupies residues 320-340 (GIVGGIFSTTGMLHGIGKFIV). Residues 341-377 (EIICCRFRLGSYKPVNSVPFEDGHTDNHLPLLENNTH) are Cytoplasmic-facing.

It belongs to the ERGIC family. In terms of assembly, may form a heteromeric complex composed of ERGIC1, ERGIC2 and ERGIC3. Interacts with ERGIC3, the interaction is required for the stable expression of both proteins. May interact with EEF1A1.

The protein localises to the endoplasmic reticulum-Golgi intermediate compartment membrane. It is found in the golgi apparatus. It localises to the cis-Golgi network membrane. Its subcellular location is the endoplasmic reticulum membrane. The protein resides in the cytoplasm. The protein localises to the nucleus. Its function is as follows. Possible role in transport between endoplasmic reticulum and Golgi. The polypeptide is Endoplasmic reticulum-Golgi intermediate compartment protein 2 (ERGIC2) (Macaca fascicularis (Crab-eating macaque)).